Reading from the N-terminus, the 358-residue chain is Homoserine O-succinyltransferase (358 aa).

The active-site Acyl-thioester intermediate is C146. K167 and S196 together coordinate substrate. H239 (proton acceptor) is an active-site residue. The active site involves E241. Position 253 (R253) interacts with substrate.

This sequence belongs to the MetA family.

It localises to the cytoplasm. The catalysed reaction is L-homoserine + succinyl-CoA = O-succinyl-L-homoserine + CoA. It functions in the pathway amino-acid biosynthesis; L-methionine biosynthesis via de novo pathway; O-succinyl-L-homoserine from L-homoserine: step 1/1. Transfers a succinyl group from succinyl-CoA to L-homoserine, forming succinyl-L-homoserine. In Nitrosococcus oceani (strain ATCC 19707 / BCRC 17464 / JCM 30415 / NCIMB 11848 / C-107), this protein is Homoserine O-succinyltransferase.